The following is a 198-amino-acid chain: Probable molybdenum cofactor guanylyltransferase (198 aa).

Residues 9–11, K22, D66, and D95 each bind GTP; that span reads LAG. D95 is a Mg(2+) binding site.

The protein belongs to the MobA family. The cofactor is Mg(2+).

The protein resides in the cytoplasm. The catalysed reaction is Mo-molybdopterin + GTP + H(+) = Mo-molybdopterin guanine dinucleotide + diphosphate. Transfers a GMP moiety from GTP to Mo-molybdopterin (Mo-MPT) cofactor (Moco or molybdenum cofactor) to form Mo-molybdopterin guanine dinucleotide (Mo-MGD) cofactor. This Clostridium perfringens (strain SM101 / Type A) protein is Probable molybdenum cofactor guanylyltransferase.